Here is a 43-residue protein sequence, read N- to C-terminus: Protein PsbN (43 aa).

The helical transmembrane segment at 7–27 threads the bilayer; that stretch reads VAIFISCLLVSFTGYALYTAF.

Belongs to the PsbN family.

It localises to the plastid. It is found in the chloroplast thylakoid membrane. Functionally, may play a role in photosystem I and II biogenesis. In Huperzia lucidula (Shining clubmoss), this protein is Protein PsbN.